We begin with the raw amino-acid sequence, 652 residues long: Vitrin (652 aa).

A signal peptide spans 1 to 26; it reads MGIVVLTMKASVIEMFLVLLVTGIQS. An LCCL domain is found at 40-133; that stretch reads TVPQISCDVR…LSLPRWRESF (94 aa). Intrachain disulfides connect Cys46/Cys62 and Cys66/Cys86. Disordered stretches follow at residues 137–181 and 196–231; these read EGKP…AAQP and THTT…EPAL. Residues 145–158 show a composition bias toward low complexity; that stretch reads TYPSSLTYSSSKSP. Residues 196–212 are compositionally biased toward polar residues; that stretch reads THTTLPKPSPSAGSTAS. 2 VWFA domains span residues 267 to 452 and 469 to 638; these read DLSF…VKRV and DIGF…VPKV. Residue Asn494 is glycosylated (N-linked (GlcNAc...) asparagine).

Binds dermatan sulfate and chondroitin sulfate.

The protein localises to the secreted. It localises to the extracellular space. It is found in the extracellular matrix. Functionally, promotes matrix assembly and cell adhesiveness. Plays a role in spinal cord formation by regulating the proliferation and differentiation of neural stem cells. This Bos taurus (Bovine) protein is Vitrin (VIT).